The chain runs to 579 residues: Fatty-acid amide hydrolase 1 (579 aa).

The helical transmembrane segment at T9–L29 threads the bilayer. The Cytoplasmic portion of the chain corresponds to R30–D403. The Charge relay system role is filled by K142. Residues M191, S217, and I238 to S241 contribute to the substrate site. Catalysis depends on S217, which acts as the Charge relay system. The active-site Acyl-ester intermediate is S241. Residue S241 is modified to Phosphoserine. An intramembrane segment occupies L404–L433. At N434 to S579 the chain is on the cytoplasmic side.

Belongs to the amidase family. As to quaternary structure, homodimer. In terms of tissue distribution, found in neuronal cells throughout the CNS. Expressed in liver and brain, and to a lesser extent in spleen, lung, kidney and testes.

The protein localises to the endoplasmic reticulum membrane. Its subcellular location is the golgi apparatus membrane. It carries out the reaction N-(5Z,8Z,11Z,14Z-eicosatetraenoyl)-ethanolamine + H2O = ethanolamine + (5Z,8Z,11Z,14Z)-eicosatetraenoate. The enzyme catalyses (9Z)-octadecenamide + H2O = (9Z)-octadecenoate + NH4(+). It catalyses the reaction 2-(5Z,8Z,11Z,14Z-eicosatetraenoyl)-glycerol + H2O = glycerol + (5Z,8Z,11Z,14Z)-eicosatetraenoate + H(+). The catalysed reaction is (9Z,12Z,15Z)-octadecatrienamide + H2O = (9Z,12Z,15Z)-octadecatrienoate + NH4(+). It carries out the reaction (5Z,8Z,11Z,14Z)-eicosatetraenamide + H2O = (5Z,8Z,11Z,14Z)-eicosatetraenoate + NH4(+). The enzyme catalyses (6Z)-octadecenamide + H2O = (6Z)-octadecenoate + NH4(+). It catalyses the reaction (15Z)-tetracosenamide + H2O = (15Z)-tetracosenoate + NH4(+). The catalysed reaction is (8Z,11Z,14Z)-eicosatrienamide + H2O = (8Z,11Z,14Z)-eicosatrienoate + NH4(+). It carries out the reaction (11Z,14Z,17Z)-eicosatrienamide + H2O = (11Z,14Z,17Z)-eicosatrienoate + NH4(+). The enzyme catalyses (11Z,14Z)-eicosadienamide + H2O = (11Z,14Z)-eicosadienoate + NH4(+). It catalyses the reaction (9Z,12Z)-octadecadienamide + H2O = (9Z,12Z)-octadecadienoate + NH4(+). The catalysed reaction is tetradecamide + H2O = tetradecanoate + NH4(+). It carries out the reaction N-(9Z-octadecenoyl) ethanolamine + H2O = ethanolamine + (9Z)-octadecenoate. The enzyme catalyses N-(9Z-octadecenoyl)-taurine + H2O = taurine + (9Z)-octadecenoate. It catalyses the reaction 1-O-methyl-(5Z,8Z,11Z,14Z)-eicosatetraenoate + H2O = methanol + (5Z,8Z,11Z,14Z)-eicosatetraenoate + H(+). The catalysed reaction is (11Z)-eicosenamide + H2O = (11Z)-eicosenoate + NH4(+). It carries out the reaction N-(9Z-hexadecenoyl) ethanolamine + H2O = (9Z)-hexadecenoate + ethanolamine. The enzyme catalyses N-octadecanoyl ethanolamine + H2O = octadecanoate + ethanolamine. It catalyses the reaction N-docosanoyl-ethanolamine + H2O = docosanoate + ethanolamine. The catalysed reaction is N-tetracosanoyl-taurine + H2O = tetracosanoate + taurine. It carries out the reaction N-(15Z-tetracosenoyl)-ethanolamine + H2O = (15Z)-tetracosenoate + ethanolamine. The enzyme catalyses N-docosanoyl-taurine + H2O = docosanoate + taurine. It catalyses the reaction N-(15Z-tetracosenoyl)-taurine + H2O = (15Z)-tetracosenoate + taurine. The catalysed reaction is N-tricosanoyl-taurine + H2O = tricosanoate + taurine. It carries out the reaction (9Z)-octadecenoate + glycine = N-(9Z-octadecenoyl)glycine + H2O. The enzyme catalyses N-(5Z,8Z,11Z,14Z)-eicosatetraenoyl-glycine + H2O = (5Z,8Z,11Z,14Z)-eicosatetraenoate + glycine. It catalyses the reaction N-(5Z,8Z,11Z,14Z-eicosatetraenoyl)-L-serine + H2O = (5Z,8Z,11Z,14Z)-eicosatetraenoate + L-serine. Its activity is regulated as follows. inhibited by trifluoromethyl ketone. Functionally, catalyzes the hydrolysis of endogenous amidated lipids like the sleep-inducing lipid oleamide ((9Z)-octadecenamide), the endocannabinoid anandamide (N-(5Z,8Z,11Z,14Z-eicosatetraenoyl)-ethanolamine), as well as other fatty amides, to their corresponding fatty acids, thereby regulating the signaling functions of these molecules. Hydrolyzes polyunsaturated substrate anandamide preferentially as compared to monounsaturated substrates. It can also catalyze the hydrolysis of the endocannabinoid 2-arachidonoylglycerol (2-(5Z,8Z,11Z,14Z-eicosatetraenoyl)-glycerol). FAAH cooperates with PM20D1 in the hydrolysis of amino acid-conjugated fatty acids such as N-fatty acyl glycine and N-fatty acyl-L-serine, thereby acting as a physiological regulator of specific subsets of intracellular, but not of extracellular, N-fatty acyl amino acids. This is Fatty-acid amide hydrolase 1 (Faah) from Rattus norvegicus (Rat).